Here is a 592-residue protein sequence, read N- to C-terminus: V-type ATP synthase alpha chain (592 aa).

Residue 233-240 coordinates ATP; sequence GPFGSGKT.

The protein belongs to the ATPase alpha/beta chains family.

The catalysed reaction is ATP + H2O + 4 H(+)(in) = ADP + phosphate + 5 H(+)(out). Its function is as follows. Produces ATP from ADP in the presence of a proton gradient across the membrane. The V-type alpha chain is a catalytic subunit. This is V-type ATP synthase alpha chain from Clostridium botulinum (strain Loch Maree / Type A3).